An 825-amino-acid polypeptide reads, in one-letter code: Probable inorganic carbon transporter subunit DabA (825 aa).

Positions 346, 348, 516, and 531 each coordinate Zn(2+).

This sequence belongs to the inorganic carbon transporter (TC 9.A.2) DabA family. As to quaternary structure, forms a complex with DabB. It depends on Zn(2+) as a cofactor.

Its subcellular location is the cell inner membrane. Its function is as follows. Part of an energy-coupled inorganic carbon pump. The protein is Probable inorganic carbon transporter subunit DabA of Paracidovorax citrulli (strain AAC00-1) (Acidovorax citrulli).